The following is a 310-amino-acid chain: MGNQVEKLTHLSYKEVPTADPTGVDRDDGPRIGVSYIFSNDDEDVEPQPPPQGPDGGGLPDGGDGPPPPQPQPYDPRLHEVECSVFYRDECIYQKSFAPGSAALSTYTPENLLNKCKPGDLVEFVSQAQYPHWAVYVGNFQVVHLHRLEVINSFLTDASQGRRGRVVNDLYRYKPLSSSAVVRNALAHVGAKERELSWRNSESFAAWCRYGKREFKIGGELRIGKQPYRLQIQLSAQRSHTLEFQSLEDLIMEKRRNDQIGRAAVLQELATHLHPAEPEEGDSNVARTTPPPGRPPAPSSEEEDGEAVAH.

The disordered stretch occupies residues 1-76 (MGNQVEKLTH…PPPQPQPYDP (76 aa)). A compositionally biased stretch (gly residues) spans 54–64 (PDGGGLPDGGD). A compositionally biased stretch (pro residues) spans 65-74 (GPPPPQPQPY). Positions 122-217 (VEFVSQAQYP…CRYGKREFKI (96 aa)) constitute an LRAT domain. The disordered stretch occupies residues 274–310 (HPAEPEEGDSNVARTTPPPGRPPAPSSEEEDGEAVAH). Residues 289–298 (TPPPGRPPAP) show a composition bias toward pro residues. The span at 300–310 (SEEEDGEAVAH) shows a compositional bias: acidic residues.

This sequence belongs to the LRATD family. As to expression, expressed in esophageal squamous cell carcinomas.

The polypeptide is Protein LRATD2 (Homo sapiens (Human)).